The following is a 418-amino-acid chain: Glutamyl-tRNA reductase (418 aa).

Residues 49–52 (TCNR), serine 107, 112–114 (EPQ), and glutamine 118 each bind substrate. The Nucleophile role is filled by cysteine 50. Residue 187 to 192 (GAGETI) participates in NADP(+) binding.

Belongs to the glutamyl-tRNA reductase family. As to quaternary structure, homodimer.

It catalyses the reaction (S)-4-amino-5-oxopentanoate + tRNA(Glu) + NADP(+) = L-glutamyl-tRNA(Glu) + NADPH + H(+). The protein operates within porphyrin-containing compound metabolism; protoporphyrin-IX biosynthesis; 5-aminolevulinate from L-glutamyl-tRNA(Glu): step 1/2. Catalyzes the NADPH-dependent reduction of glutamyl-tRNA(Glu) to glutamate 1-semialdehyde (GSA). The protein is Glutamyl-tRNA reductase of Pseudoalteromonas translucida (strain TAC 125).